Here is a 99-residue protein sequence, read N- to C-terminus: Evasin P1162 (99 aa).

Positions 1–28 (MEVKTFAFLQIAVCIAIGIELICAGTNA) are cleaved as a signal peptide. Intrachain disulfides connect C40/C59, C44/C61, and C55/C72. Residues N43, N49, N58, and N85 are each glycosylated (N-linked (GlcNAc...) asparagine).

Its subcellular location is the secreted. Salivary chemokine-binding protein which binds to host chemokines CXCL1, CXCL2, CXCL3, CXCL5 and CXCL8. The sequence is that of Evasin P1162 from Ixodes ricinus (Common tick).